We begin with the raw amino-acid sequence, 302 residues long: MEKEKLIEEINRLKEERNAIIMAHNYQLPEIQDIADFLGDSLELARKAVNIDADVIVFAGVDFMAETAKILNPEKTVLLPTPRATCAMANMLTIKHIIEAKKKYPDAPVVLYVNSSAEAKAYADVTVTSANAAKIVGKLDSDVVIFGPDKNLAHYVAKVTGKKVIPVPPNGHCYVHRKFTLEDVERARKLYPNAKLMVHPECEPEVQEQADIIVSTGGMIKRACEHDEWVVFTEREMVCRLQKLYPSKKFYPAREDATCIGMKAITLNHIYESLRDMKYRVEVPAEIAEKARKAIERMLEMS.

Iminosuccinate is bound by residues His24 and Ser41. Cys86 serves as a coordination point for [4Fe-4S] cluster. Residues 112 to 114 (YVN) and Ser129 each bind iminosuccinate. Cys173 is a binding site for [4Fe-4S] cluster. Iminosuccinate contacts are provided by residues 199 to 201 (HPE) and Thr216. Cys259 lines the [4Fe-4S] cluster pocket.

It belongs to the quinolinate synthase family. Type 2 subfamily. [4Fe-4S] cluster serves as cofactor.

The protein resides in the cytoplasm. The enzyme catalyses iminosuccinate + dihydroxyacetone phosphate = quinolinate + phosphate + 2 H2O + H(+). It functions in the pathway cofactor biosynthesis; NAD(+) biosynthesis; quinolinate from iminoaspartate: step 1/1. Catalyzes the condensation of iminoaspartate with dihydroxyacetone phosphate to form quinolinate. The sequence is that of Quinolinate synthase from Thermococcus kodakarensis (strain ATCC BAA-918 / JCM 12380 / KOD1) (Pyrococcus kodakaraensis (strain KOD1)).